Consider the following 367-residue polypeptide: Glutamate 5-kinase (367 aa).

Lysine 10 contacts ATP. Substrate-binding residues include serine 50, aspartate 137, and asparagine 149. ATP is bound by residues 169–170 (TD) and 211–217 (TGGMATK). The PUA domain maps to 275–353 (AGEITVDDGA…QQISEILGYE (79 aa)).

The protein belongs to the glutamate 5-kinase family.

It is found in the cytoplasm. It carries out the reaction L-glutamate + ATP = L-glutamyl 5-phosphate + ADP. It participates in amino-acid biosynthesis; L-proline biosynthesis; L-glutamate 5-semialdehyde from L-glutamate: step 1/2. Catalyzes the transfer of a phosphate group to glutamate to form L-glutamate 5-phosphate. This is Glutamate 5-kinase from Yersinia enterocolitica serotype O:8 / biotype 1B (strain NCTC 13174 / 8081).